The chain runs to 145 residues: Large ribosomal subunit protein bL17 (145 aa).

Belongs to the bacterial ribosomal protein bL17 family. As to quaternary structure, part of the 50S ribosomal subunit. Contacts protein L32.

This Francisella tularensis subsp. holarctica (strain FTNF002-00 / FTA) protein is Large ribosomal subunit protein bL17.